A 212-amino-acid polypeptide reads, in one-letter code: Phosphatidylserine decarboxylase proenzyme (212 aa).

The active-site Schiff-base intermediate with substrate; via pyruvic acid is serine 182. Serine 182 carries the post-translational modification Pyruvic acid (Ser); by autocatalysis.

The protein belongs to the phosphatidylserine decarboxylase family. PSD-A subfamily. As to quaternary structure, heterodimer of a large membrane-associated beta subunit and a small pyruvoyl-containing alpha subunit. Requires pyruvate as cofactor. Is synthesized initially as an inactive proenzyme. Formation of the active enzyme involves a self-maturation process in which the active site pyruvoyl group is generated from an internal serine residue via an autocatalytic post-translational modification. Two non-identical subunits are generated from the proenzyme in this reaction, and the pyruvate is formed at the N-terminus of the alpha chain, which is derived from the carboxyl end of the proenzyme. The post-translation cleavage follows an unusual pathway, termed non-hydrolytic serinolysis, in which the side chain hydroxyl group of the serine supplies its oxygen atom to form the C-terminus of the beta chain, while the remainder of the serine residue undergoes an oxidative deamination to produce ammonia and the pyruvoyl prosthetic group on the alpha chain.

It localises to the cell membrane. The enzyme catalyses a 1,2-diacyl-sn-glycero-3-phospho-L-serine + H(+) = a 1,2-diacyl-sn-glycero-3-phosphoethanolamine + CO2. Its pathway is phospholipid metabolism; phosphatidylethanolamine biosynthesis; phosphatidylethanolamine from CDP-diacylglycerol: step 2/2. In terms of biological role, catalyzes the formation of phosphatidylethanolamine (PtdEtn) from phosphatidylserine (PtdSer). This chain is Phosphatidylserine decarboxylase proenzyme, found in Paraburkholderia xenovorans (strain LB400).